We begin with the raw amino-acid sequence, 243 residues long: Bidirectional sugar transporter SWEET2a (243 aa).

An N-terminal signal peptide occupies residues 1–15 (MMNALGLSVAATSTG). At 16-24 (SPFHDVCCY) the chain is on the extracellular side. The helical transmembrane segment at 25–45 (GAGIAGNIFALVLFISPLPTF) threads the bilayer. In terms of domain architecture, MtN3/slv 1 spans 27–112 (GIAGNIFALV…ATFIAFADAK (86 aa)). Topologically, residues 46–56 (KRIVRNGSTEQ) are cytoplasmic. A helical membrane pass occupies residues 57-79 (FSAMPYIYSLLNCLICLWYGLPF). Residues 80–90 (VSYGVVLVATV) are Extracellular-facing. A helical membrane pass occupies residues 91–111 (NSIGALFQLAYTATFIAFADA). Topologically, residues 112–118 (KNRVKVS) are cytoplasmic. The chain crosses the membrane as a helical span at residues 119–139 (SLLVMVFGVFALIVYVSLALF). Residues 140–146 (DHQTRQL) are Extracellular-facing. The helical transmembrane segment at 147–167 (FVGYLSVASLIFMFASPLSII) threads the bilayer. Positions 147 to 229 (FVGYLSVASL…QLVLYGYFRK (83 aa)) constitute a MtN3/slv 2 domain. At 168–180 (NLVIRTKSVEYMP) the chain is on the cytoplasmic side. Residues 181-201 (FYLSLSMFLMSVSFFAYGVLL) traverse the membrane as a helical segment. The Extracellular portion of the chain corresponds to 202-203 (HD). A helical membrane pass occupies residues 204–224 (FFIYIPNGIGTVLGVIQLVLY). The Cytoplasmic segment spans residues 225–243 (GYFRKGSREDSLPLLVTHT).

It belongs to the SWEET sugar transporter family. In terms of assembly, forms homooligomers and/or heterooligomers.

Its subcellular location is the cell membrane. Functionally, mediates both low-affinity uptake and efflux of sugar across the plasma membrane. The protein is Bidirectional sugar transporter SWEET2a (SWEET2A) of Oryza sativa subsp. indica (Rice).